We begin with the raw amino-acid sequence, 312 residues long: Probable N-glycosylase/DNA lyase (312 aa).

The tract at residues Met-1–Pro-22 is disordered. The span at Thr-13 to Pro-22 shows a compositional bias: polar residues. Lys-235 is a catalytic residue.

This sequence belongs to the type-1 OGG1 family.

The catalysed reaction is 2'-deoxyribonucleotide-(2'-deoxyribose 5'-phosphate)-2'-deoxyribonucleotide-DNA = a 3'-end 2'-deoxyribonucleotide-(2,3-dehydro-2,3-deoxyribose 5'-phosphate)-DNA + a 5'-end 5'-phospho-2'-deoxyribonucleoside-DNA + H(+). DNA repair enzyme that incises DNA at 8-oxoG residues. Excises 7,8-dihydro-8-oxoguanine and 2,6-diamino-4-hydroxy-5-N-methylformamidopyrimidine (FAPY) from damaged DNA. Has a beta-lyase activity that nicks DNA 3' to the lesion. The chain is Probable N-glycosylase/DNA lyase from Methanothermobacter thermautotrophicus (strain ATCC 29096 / DSM 1053 / JCM 10044 / NBRC 100330 / Delta H) (Methanobacterium thermoautotrophicum).